The chain runs to 37 residues: Potassium channel toxin alpha-KTx 2.14 (37 aa).

3 cysteine pairs are disulfide-bonded: Cys-7/Cys-28, Cys-13/Cys-33, and Cys-17/Cys-35.

It belongs to the short scorpion toxin superfamily. Potassium channel inhibitor family. Alpha-KTx 02 subfamily. In terms of tissue distribution, expressed by the venom gland.

Its subcellular location is the secreted. Reversibly blocks hKv1.1/KCNA1 (50% inhibition of current at 1 uM). Seems not to be voltage-dependent. The polypeptide is Potassium channel toxin alpha-KTx 2.14 (Heteroctenus garridoi (Cuban scorpion)).